A 377-amino-acid chain; its full sequence is ATP phosphoribosyltransferase regulatory subunit (377 aa).

It belongs to the class-II aminoacyl-tRNA synthetase family. HisZ subfamily. As to quaternary structure, heteromultimer composed of HisG and HisZ subunits.

Its subcellular location is the cytoplasm. It participates in amino-acid biosynthesis; L-histidine biosynthesis; L-histidine from 5-phospho-alpha-D-ribose 1-diphosphate: step 1/9. In terms of biological role, required for the first step of histidine biosynthesis. May allow the feedback regulation of ATP phosphoribosyltransferase activity by histidine. The polypeptide is ATP phosphoribosyltransferase regulatory subunit (Sinorhizobium medicae (strain WSM419) (Ensifer medicae)).